Here is an 86-residue protein sequence, read N- to C-terminus: Myosuppressin (86 aa).

Positions 1–18 are cleaved as a signal peptide; that stretch reads MAIFCNNVLAALPTQCNP. Residues 19–70 constitute a propeptide that is removed on maturation; sequence GFLDDLPPRIRKVCVALSRIYELGSEMESYIGDKENHITGFHESIPLLDSGV. The residue at position 73 (Gln73) is a Pyrrolidone carboxylic acid. At Phe82 the chain carries Phenylalanine amide.

The protein localises to the secreted. Myoinhibiting neuropeptide. The polypeptide is Myosuppressin (Apis mellifera (Honeybee)).